The chain runs to 241 residues: tRNA pseudouridine synthase A (241 aa).

Aspartate 52 serves as the catalytic Nucleophile. Tyrosine 110 contributes to the substrate binding site.

The protein belongs to the tRNA pseudouridine synthase TruA family. As to quaternary structure, homodimer.

The enzyme catalyses uridine(38/39/40) in tRNA = pseudouridine(38/39/40) in tRNA. Functionally, formation of pseudouridine at positions 38, 39 and 40 in the anticodon stem and loop of transfer RNAs. The chain is tRNA pseudouridine synthase A from Aquifex aeolicus (strain VF5).